A 233-amino-acid chain; its full sequence is Protein Mis18-alpha (233 aa).

Phosphoserine is present on residues Ser-36, Ser-39, and Ser-40. Residues 80–178 (PLVFLCSGCR…SVEAIESYVL (99 aa)) form the Mis18 domain. Residues Cys-85, Cys-88, Cys-141, and Cys-144 each coordinate Zn(2+). Residue Lys-162 forms a Glycyl lysine isopeptide (Lys-Gly) (interchain with G-Cter in SUMO2) linkage. Phosphoserine is present on Ser-233.

This sequence belongs to the mis18 family. Homodimer, and heterodimer with OIP5/MIS18B. Identified in a complex containing MIS18A, OIP5/MIS18B, MIS18BP1, RBBP7 and RBBP4. As to expression, detected in testis.

It localises to the nucleus. It is found in the chromosome. The protein localises to the centromere. Required for recruitment of CENPA to centromeres and normal chromosome segregation during mitosis. The polypeptide is Protein Mis18-alpha (MIS18A) (Homo sapiens (Human)).